We begin with the raw amino-acid sequence, 625 residues long: Glucose dehydrogenase [FAD, quinone] (625 aa).

The N-terminal stretch at 1–42 is a signal peptide; sequence MSASASACDCLVGVPTGPTLASTCGGSAFMLFMGLLEVFIRS. An FAD-binding site is contributed by 66–95; that stretch reads DFIVIGGGSAGSVVASRLSEVPQWKVLLIE. The Proton acceptor role is filled by histidine 544. Residue selenocysteine 613 is a non-standard amino acid, selenocysteine.

The protein belongs to the GMC oxidoreductase family. Requires FAD as cofactor.

It localises to the secreted. The catalysed reaction is a quinone + D-glucose = D-glucono-1,5-lactone + a quinol. Its function is as follows. Essential for cuticular modification during development. In Drosophila melanogaster (Fruit fly), this protein is Glucose dehydrogenase [FAD, quinone] (Gld).